A 214-amino-acid polypeptide reads, in one-letter code: Large ribosomal subunit protein bL25 (214 aa).

A disordered region spans residues 187 to 214; sequence AEVAPSIEETVEPEVIKKGKKAEEEEEK. The span at 200-214 shows a compositional bias: basic and acidic residues; it reads EVIKKGKKAEEEEEK.

It belongs to the bacterial ribosomal protein bL25 family. CTC subfamily. In terms of assembly, part of the 50S ribosomal subunit; part of the 5S rRNA/L5/L18/L25 subcomplex. Contacts the 5S rRNA. Binds to the 5S rRNA independently of L5 and L18.

Functionally, this is one of the proteins that binds to the 5S RNA in the ribosome where it forms part of the central protuberance. The polypeptide is Large ribosomal subunit protein bL25 (Thermodesulfovibrio yellowstonii (strain ATCC 51303 / DSM 11347 / YP87)).